The chain runs to 363 residues: Chorismate synthase (363 aa).

NADP(+) is bound by residues Arg-48 and Arg-54. Residues 131–133 (RSS), 244–245 (NA), Gly-288, 303–307 (KPTSS), and Arg-329 contribute to the FMN site.

This sequence belongs to the chorismate synthase family. Homotetramer. The cofactor is FMNH2.

It catalyses the reaction 5-O-(1-carboxyvinyl)-3-phosphoshikimate = chorismate + phosphate. It participates in metabolic intermediate biosynthesis; chorismate biosynthesis; chorismate from D-erythrose 4-phosphate and phosphoenolpyruvate: step 7/7. Its function is as follows. Catalyzes the anti-1,4-elimination of the C-3 phosphate and the C-6 proR hydrogen from 5-enolpyruvylshikimate-3-phosphate (EPSP) to yield chorismate, which is the branch point compound that serves as the starting substrate for the three terminal pathways of aromatic amino acid biosynthesis. This reaction introduces a second double bond into the aromatic ring system. The polypeptide is Chorismate synthase (Hyphomonas neptunium (strain ATCC 15444)).